The sequence spans 280 residues: Soluble inorganic pyrophosphatase 1, chloroplastic (280 aa).

Residue Arg-120 coordinates diphosphate. 3 residues coordinate Mg(2+): Asp-152, Asp-157, and Asp-189.

Monomer. The cofactor is Mg(2+). The N-terminus is blocked.

Its subcellular location is the plastid. It localises to the chloroplast. It carries out the reaction diphosphate + H2O = 2 phosphate + H(+). This Chlamydomonas reinhardtii (Chlamydomonas smithii) protein is Soluble inorganic pyrophosphatase 1, chloroplastic (ppa1).